The primary structure comprises 281 residues: Endonuclease III-like protein 1 (281 aa).

A mitochondrion-targeting transit peptide spans 1 to 17; the sequence is MCAAAPRGGGRAARRLG. The tract at residues 1–60 is disordered; that stretch reads MCAAAPRGGGRAARRLGAATAGSRVPSAAPRYSRRTRRVPIAYEAEPKPESPGPKWEPEN. Positions 15 to 24 are enriched in low complexity; that stretch reads RLGAATAGSR. The 25-residue stretch at 168–192 folds into the HhH domain; it reads KYGGDIPGTVEELVKLPGVGPKMAH. Lys-189 serves as the catalytic Nucleophile; for N-glycosylase activity. The [4Fe-4S] cluster site is built by Cys-259, Cys-266, Cys-269, and Cys-275.

Belongs to the Nth/MutY family. [4Fe-4S] cluster serves as cofactor.

It is found in the nucleus. The protein localises to the mitochondrion. The enzyme catalyses 2'-deoxyribonucleotide-(2'-deoxyribose 5'-phosphate)-2'-deoxyribonucleotide-DNA = a 3'-end 2'-deoxyribonucleotide-(2,3-dehydro-2,3-deoxyribose 5'-phosphate)-DNA + a 5'-end 5'-phospho-2'-deoxyribonucleoside-DNA + H(+). Bifunctional DNA N-glycosylase with associated apurinic/apyrimidinic (AP) lyase function that catalyzes the first step in base excision repair (BER), the primary repair pathway for the repair of oxidative DNA damage. The DNA N-glycosylase activity releases the damaged DNA base from DNA by cleaving the N-glycosidic bond, leaving an AP site. The AP lyase activity cleaves the phosphodiester bond 3' to the AP site by a beta-elimination. Primarily recognizes and repairs oxidative base damage of pyrimidines. This chain is Endonuclease III-like protein 1, found in Gallus gallus (Chicken).